The sequence spans 123 residues: ATP synthase epsilon chain (123 aa).

It belongs to the ATPase epsilon chain family. F-type ATPases have 2 components, CF(1) - the catalytic core - and CF(0) - the membrane proton channel. CF(1) has five subunits: alpha(3), beta(3), gamma(1), delta(1), epsilon(1). CF(0) has three main subunits: a, b and c.

It is found in the cell inner membrane. Functionally, produces ATP from ADP in the presence of a proton gradient across the membrane. This chain is ATP synthase epsilon chain (atpC), found in Helicobacter pylori (strain ATCC 700392 / 26695) (Campylobacter pylori).